Consider the following 159-residue polypeptide: Urease subunit beta 2 (159 aa).

The disordered stretch occupies residues 1–23; sequence MAKEPTEAAHPQPEQTKTNHKAH.

It belongs to the urease beta subunit family. As to quaternary structure, heterotrimer of UreA (gamma), UreB (beta) and UreC (alpha) subunits. Three heterotrimers associate to form the active enzyme.

Its subcellular location is the cytoplasm. The catalysed reaction is urea + 2 H2O + H(+) = hydrogencarbonate + 2 NH4(+). Its pathway is nitrogen metabolism; urea degradation; CO(2) and NH(3) from urea (urease route): step 1/1. The protein is Urease subunit beta 2 of Brucella abortus biovar 1 (strain 9-941).